The following is a 143-amino-acid chain: Ribosomal RNA large subunit methyltransferase H (143 aa).

S-adenosyl-L-methionine contacts are provided by residues Gly-95 and Phe-111–Phe-116.

This sequence belongs to the RNA methyltransferase RlmH family. As to quaternary structure, homodimer.

The protein resides in the cytoplasm. It catalyses the reaction pseudouridine(1915) in 23S rRNA + S-adenosyl-L-methionine = N(3)-methylpseudouridine(1915) in 23S rRNA + S-adenosyl-L-homocysteine + H(+). In terms of biological role, specifically methylates the pseudouridine at position 1915 (m3Psi1915) in 23S rRNA. This chain is Ribosomal RNA large subunit methyltransferase H, found in Metamycoplasma arthritidis (strain 158L3-1) (Mycoplasma arthritidis).